We begin with the raw amino-acid sequence, 459 residues long: MNPTHSQQPHLTIIGAGLAGCEAAWQAAALGVQVTLHEMKPTSFSPAHQSADLAELVCSNSLRGAGMNNAVGCLKEELRRCATLFMQAADATAVPAGGALAVDRDAFSRYITEHIEQHPLITLQRNEQCSVPPEGTVIIASGPLTSDALAPHLAQLTGSRHLYFYDAIAPIIEADSIDFSIAWKASRYGRGGDDYINCPMSRDEYMTFVEALKTADKVAGKDFEKVIHFEGCMPIEEMARRGDMTLAFGPMKPVGLPDPRTGKDPFAVVQLRQDNLHATLFNMVGFQTKLTYPEQRRIFRTIPGLQDARFARLGSMHRNTFINAPRCLDQHLRLTSDPRMFFAGQITGVEGYVESAACGFLAGLFAAGQLTDHAVPLPPATTGLGALLGHLSHSSPDDFQPMNVNYGLFPPLEGRKRKRSERRLAMAERALRDLEPWRQRVLSHIPDLKPFPAEDSDDV.

15–20 (GAGLAG) is an FAD binding site.

It belongs to the MnmG family. TrmFO subfamily. The cofactor is FAD.

It localises to the cytoplasm. It carries out the reaction uridine(54) in tRNA + (6R)-5,10-methylene-5,6,7,8-tetrahydrofolate + NADH + H(+) = 5-methyluridine(54) in tRNA + (6S)-5,6,7,8-tetrahydrofolate + NAD(+). The enzyme catalyses uridine(54) in tRNA + (6R)-5,10-methylene-5,6,7,8-tetrahydrofolate + NADPH + H(+) = 5-methyluridine(54) in tRNA + (6S)-5,6,7,8-tetrahydrofolate + NADP(+). Catalyzes the folate-dependent formation of 5-methyl-uridine at position 54 (M-5-U54) in all tRNAs. The chain is Methylenetetrahydrofolate--tRNA-(uracil-5-)-methyltransferase TrmFO from Syntrophotalea carbinolica (strain DSM 2380 / NBRC 103641 / GraBd1) (Pelobacter carbinolicus).